A 476-amino-acid chain; its full sequence is Mitochondrial-processing peptidase subunit beta (476 aa).

Residues 1-28 (MASRRLALNLAQGVKARAGGVINPFRRG) constitute a mitochondrion transit peptide. Position 84 (H84) interacts with Zn(2+). Residue E87 is the Proton acceptor of the active site. 2 residues coordinate Zn(2+): H88 and E164.

This sequence belongs to the peptidase M16 family. Heterodimer of mpp (alpha) and pep (beta) subunits, forming the mitochondrial processing protease (MPP) in which mpp is involved in substrate recognition and binding and pep is the catalytic subunit. Component of the ubiquinol-cytochrome c oxidoreductase (cytochrome b-c1 complex, complex III, CIII), a multisubunit enzyme composed of 10 subunits. The complex is composed of 3 respiratory subunits cytochrome b (cob), cytochrome c1 (cyt-1) and Rieske protein (fes-1), 2 core protein subunits pep and ucr-1, and 5 low-molecular weight protein subunits qcr6, qcr7, qcr8, qcr9 and probably NCU16844/qcr10. The complex exists as an obligatory dimer and forms supercomplexes (SCs) in the inner mitochondrial membrane with NADH-ubiquinone oxidoreductase (complex I, CI) and cytochrome c oxidase (complex IV, CIV), resulting in different assemblies (supercomplexes SCI(1)III(2), SCIII(2)IV(1) and SCIII(2)IV(2) as well as higher order I(x)III(y)IV(z) megacomplexes). The cofactor is Zn(2+).

The protein resides in the mitochondrion matrix. Its subcellular location is the mitochondrion inner membrane. It catalyses the reaction Release of N-terminal transit peptides from precursor proteins imported into the mitochondrion, typically with Arg in position P2.. Binding to mpp is required for catalytic activity. Inhibited by metal chelator ethylenediaminetetraacetic acid (EDTA). Catalytic subunit of the essential mitochondrial processing protease (MPP), which cleaves the mitochondrial sequence off newly imported precursors proteins. Preferentially, cleaves after an arginine at position P2. Its function is as follows. Component of the ubiquinol-cytochrome c oxidoreductase, a multisubunit transmembrane complex that is part of the mitochondrial electron transport chain which drives oxidative phosphorylation. The respiratory chain contains 3 multisubunit complexes succinate dehydrogenase (complex II, CII), ubiquinol-cytochrome c oxidoreductase (cytochrome b-c1 complex, complex III, CIII) and cytochrome c oxidase (complex IV, CIV), that cooperate to transfer electrons derived from NADH and succinate to molecular oxygen, creating an electrochemical gradient over the inner membrane that drives transmembrane transport and the ATP synthase. The cytochrome b-c1 complex catalyzes electron transfer from ubiquinol to cytochrome c, linking this redox reaction to translocation of protons across the mitochondrial inner membrane, with protons being carried across the membrane as hydrogens on the quinol. In the process called Q cycle, 2 protons are consumed from the matrix, 4 protons are released into the intermembrane space and 2 electrons are passed to cytochrome c. This is Mitochondrial-processing peptidase subunit beta from Neurospora crassa (strain ATCC 24698 / 74-OR23-1A / CBS 708.71 / DSM 1257 / FGSC 987).